Here is a 452-residue protein sequence, read N- to C-terminus: Bifunctional protein GlmU (452 aa).

The tract at residues 1-232 is pyrophosphorylase; it reads MTTRTSLTIV…EDEVRGINTK (232 aa). Residues 11–14, Lys-25, Gln-78, and 83–84 each bind UDP-N-acetyl-alpha-D-glucosamine; these read LAAG and GT. Asp-108 serves as a coordination point for Mg(2+). Residues Gly-144, Glu-158, Asn-173, and Asn-230 each contribute to the UDP-N-acetyl-alpha-D-glucosamine site. Asn-230 serves as a coordination point for Mg(2+). Residues 233 to 253 are linker; that stretch reads AQLAEAEAVMQTRLRQAAMTA. An N-acetyltransferase region spans residues 254–452; the sequence is GVTLISPETI…SARARKPKTS (199 aa). Residues Arg-319 and Lys-337 each coordinate UDP-N-acetyl-alpha-D-glucosamine. His-349 (proton acceptor) is an active-site residue. Tyr-352 and Asn-363 together coordinate UDP-N-acetyl-alpha-D-glucosamine. Acetyl-CoA contacts are provided by residues Ala-366, 372–373, Ser-391, Ser-409, and Arg-426; that span reads NY.

It in the N-terminal section; belongs to the N-acetylglucosamine-1-phosphate uridyltransferase family. The protein in the C-terminal section; belongs to the transferase hexapeptide repeat family. As to quaternary structure, homotrimer. Requires Mg(2+) as cofactor.

The protein resides in the cytoplasm. The catalysed reaction is alpha-D-glucosamine 1-phosphate + acetyl-CoA = N-acetyl-alpha-D-glucosamine 1-phosphate + CoA + H(+). The enzyme catalyses N-acetyl-alpha-D-glucosamine 1-phosphate + UTP + H(+) = UDP-N-acetyl-alpha-D-glucosamine + diphosphate. Its pathway is nucleotide-sugar biosynthesis; UDP-N-acetyl-alpha-D-glucosamine biosynthesis; N-acetyl-alpha-D-glucosamine 1-phosphate from alpha-D-glucosamine 6-phosphate (route II): step 2/2. The protein operates within nucleotide-sugar biosynthesis; UDP-N-acetyl-alpha-D-glucosamine biosynthesis; UDP-N-acetyl-alpha-D-glucosamine from N-acetyl-alpha-D-glucosamine 1-phosphate: step 1/1. It functions in the pathway bacterial outer membrane biogenesis; LPS lipid A biosynthesis. In terms of biological role, catalyzes the last two sequential reactions in the de novo biosynthetic pathway for UDP-N-acetylglucosamine (UDP-GlcNAc). The C-terminal domain catalyzes the transfer of acetyl group from acetyl coenzyme A to glucosamine-1-phosphate (GlcN-1-P) to produce N-acetylglucosamine-1-phosphate (GlcNAc-1-P), which is converted into UDP-GlcNAc by the transfer of uridine 5-monophosphate (from uridine 5-triphosphate), a reaction catalyzed by the N-terminal domain. The protein is Bifunctional protein GlmU of Rhodopseudomonas palustris (strain BisB5).